The sequence spans 754 residues: 5-methyltetrahydropteroyltriglutamate--homocysteine methyltransferase (754 aa).

5-methyltetrahydropteroyltri-L-glutamate is bound by residues 17-20 (RELK) and K117. L-homocysteine contacts are provided by residues 431 to 433 (IGS) and E484. L-methionine contacts are provided by residues 431-433 (IGS) and E484. Residues 515–516 (RC) and W561 contribute to the 5-methyltetrahydropteroyltri-L-glutamate site. D599 is an L-homocysteine binding site. Position 599 (D599) interacts with L-methionine. 5-methyltetrahydropteroyltri-L-glutamate is bound at residue E605. Zn(2+)-binding residues include H641, C643, and E665. H694 (proton donor) is an active-site residue. C726 serves as a coordination point for Zn(2+).

It belongs to the vitamin-B12 independent methionine synthase family. Zn(2+) is required as a cofactor.

The catalysed reaction is 5-methyltetrahydropteroyltri-L-glutamate + L-homocysteine = tetrahydropteroyltri-L-glutamate + L-methionine. It functions in the pathway amino-acid biosynthesis; L-methionine biosynthesis via de novo pathway; L-methionine from L-homocysteine (MetE route): step 1/1. Its function is as follows. Catalyzes the transfer of a methyl group from 5-methyltetrahydrofolate to homocysteine resulting in methionine formation. The protein is 5-methyltetrahydropteroyltriglutamate--homocysteine methyltransferase of Salmonella arizonae (strain ATCC BAA-731 / CDC346-86 / RSK2980).